The primary structure comprises 310 residues: tRNA-cytidine(32) 2-sulfurtransferase (310 aa).

The PP-loop motif motif lies at 45-50; the sequence is SGGKDS. [4Fe-4S] cluster contacts are provided by Cys120, Cys123, and Cys211.

The protein belongs to the TtcA family. In terms of assembly, homodimer. It depends on Mg(2+) as a cofactor. The cofactor is [4Fe-4S] cluster.

Its subcellular location is the cytoplasm. It carries out the reaction cytidine(32) in tRNA + S-sulfanyl-L-cysteinyl-[cysteine desulfurase] + AH2 + ATP = 2-thiocytidine(32) in tRNA + L-cysteinyl-[cysteine desulfurase] + A + AMP + diphosphate + H(+). It functions in the pathway tRNA modification. Its function is as follows. Catalyzes the ATP-dependent 2-thiolation of cytidine in position 32 of tRNA, to form 2-thiocytidine (s(2)C32). The sulfur atoms are provided by the cysteine/cysteine desulfurase (IscS) system. The protein is tRNA-cytidine(32) 2-sulfurtransferase of Shewanella baltica (strain OS155 / ATCC BAA-1091).